Reading from the N-terminus, the 461-residue chain is Probable Xaa-Pro aminopeptidase PEPP (461 aa).

Mn(2+) is bound by residues Asp-257, Asp-268, Glu-391, and Glu-431.

This sequence belongs to the peptidase M24B family. The cofactor is Mn(2+).

It carries out the reaction Release of any N-terminal amino acid, including proline, that is linked to proline, even from a dipeptide or tripeptide.. In terms of biological role, catalyzes the removal of a penultimate prolyl residue from the N-termini of peptides. The sequence is that of Probable Xaa-Pro aminopeptidase PEPP (PEPP) from Colletotrichum graminicola (strain M1.001 / M2 / FGSC 10212) (Maize anthracnose fungus).